Reading from the N-terminus, the 267-residue chain is Ribosomal RNA small subunit methyltransferase A (267 aa).

S-adenosyl-L-methionine contacts are provided by Asn-16, Leu-18, Gly-43, Glu-64, Asp-89, and Asn-110.

Belongs to the class I-like SAM-binding methyltransferase superfamily. rRNA adenine N(6)-methyltransferase family. RsmA subfamily.

It is found in the cytoplasm. It catalyses the reaction adenosine(1518)/adenosine(1519) in 16S rRNA + 4 S-adenosyl-L-methionine = N(6)-dimethyladenosine(1518)/N(6)-dimethyladenosine(1519) in 16S rRNA + 4 S-adenosyl-L-homocysteine + 4 H(+). In terms of biological role, specifically dimethylates two adjacent adenosines (A1518 and A1519) in the loop of a conserved hairpin near the 3'-end of 16S rRNA in the 30S particle. May play a critical role in biogenesis of 30S subunits. The polypeptide is Ribosomal RNA small subunit methyltransferase A (Pseudomonas putida (strain ATCC 47054 / DSM 6125 / CFBP 8728 / NCIMB 11950 / KT2440)).